Here is a 142-residue protein sequence, read N- to C-terminus: Protein lin-32 (142 aa).

Polar residues predominate over residues 30–48 (PLQSPNFSLDSPNYPDSLS). Positions 30–66 (PLQSPNFSLDSPNYPDSLSNGGGKDDKKKCRRYKTPS) are disordered. In terms of domain architecture, bHLH spans 72–124 (MRRSAANERERRRMNTLNVAYDELREVLPEIDSGKKLSKFETLQMAQKYIECL).

Forms a heterodimer with hlh-2. Expressed in PVD motor neurons.

The protein resides in the nucleus. Its function is as follows. Probable transcription factor which binds the E box motif 5'-CA[TC][AG]TG-3'. Essential for the specification of the neuroblast cell fate in the development of peripheral sense organs. Its role in the generation of sensory neurons may be through positively regulating the expression of the zinc finger protein ztf-11 during postdeirid neurogenesis. Required for specification of cell fate, acting in concert with lin-32, in the development of the male-specific genital sensilla (simple sense organs) known as rays. Involved in regulating glial specification, perhaps by suppressing a glial fate in different lineages during early embryogenesis. The protein is Protein lin-32 of Caenorhabditis elegans.